We begin with the raw amino-acid sequence, 146 residues long: Hemoglobin subunit beta (146 aa).

V1 bears the N-acetylvaline mark. One can recognise a Globin domain in the interval 2-146 (HLTNEEKTAV…VATALAHKYH (145 aa)). S44 carries the phosphoserine modification. Position 59 is an N6-acetyllysine (K59). H63 is a binding site for heme b. N6-acetyllysine is present on K82. Residue H92 coordinates heme b. C93 carries the S-nitrosocysteine modification. N6-acetyllysine is present on K144.

Belongs to the globin family. Heterotetramer of two alpha chains and two beta chains. In terms of tissue distribution, red blood cells.

Its function is as follows. Involved in oxygen transport from the lung to the various peripheral tissues. This is Hemoglobin subunit beta (HBB) from Lyroderma lyra (Greater Asian false-vampire bat).